A 646-amino-acid chain; its full sequence is Acetyl-coenzyme A synthetase (646 aa).

Residues 190–193 and Thr309 contribute to the CoA site; that span reads RAGN. Residues 385-387, 409-414, Asp498, and Arg513 each bind ATP; these read GEP and DTWWQT. CoA is bound at residue Ser521. Arg524 serves as a coordination point for ATP. Residues Val535, His537, and Val540 each coordinate Mg(2+). Arg582 provides a ligand contact to CoA. Lys607 bears the N6-acetyllysine mark.

The protein belongs to the ATP-dependent AMP-binding enzyme family. It depends on Mg(2+) as a cofactor. Acetylated. Deacetylation by the SIR2-homolog deacetylase activates the enzyme.

It carries out the reaction acetate + ATP + CoA = acetyl-CoA + AMP + diphosphate. Catalyzes the conversion of acetate into acetyl-CoA (AcCoA), an essential intermediate at the junction of anabolic and catabolic pathways. AcsA undergoes a two-step reaction. In the first half reaction, AcsA combines acetate with ATP to form acetyl-adenylate (AcAMP) intermediate. In the second half reaction, it can then transfer the acetyl group from AcAMP to the sulfhydryl group of CoA, forming the product AcCoA. In Pseudoalteromonas translucida (strain TAC 125), this protein is Acetyl-coenzyme A synthetase.